Consider the following 167-residue polypeptide: Schlafen-like protein (167 aa).

The protein belongs to the Schlafen family. Subgroup poxviridae B3 subfamily.

The protein is Schlafen-like protein of Bos taurus (Bovine).